A 228-amino-acid polypeptide reads, in one-letter code: 2-C-methyl-D-erythritol 4-phosphate cytidylyltransferase (228 aa).

It belongs to the IspD/TarI cytidylyltransferase family. IspD subfamily.

It catalyses the reaction 2-C-methyl-D-erythritol 4-phosphate + CTP + H(+) = 4-CDP-2-C-methyl-D-erythritol + diphosphate. The protein operates within isoprenoid biosynthesis; isopentenyl diphosphate biosynthesis via DXP pathway; isopentenyl diphosphate from 1-deoxy-D-xylulose 5-phosphate: step 2/6. In terms of biological role, catalyzes the formation of 4-diphosphocytidyl-2-C-methyl-D-erythritol from CTP and 2-C-methyl-D-erythritol 4-phosphate (MEP). The sequence is that of 2-C-methyl-D-erythritol 4-phosphate cytidylyltransferase from Mannheimia succiniciproducens (strain KCTC 0769BP / MBEL55E).